A 360-amino-acid polypeptide reads, in one-letter code: MSATYTDLREKLQSLNRDSPKEVRKRKQPASDTEEEDEAGSEPEAEEEEARKVRSGIRQMRLFSPDECAAIESKIDEVVSRADKGLYQEHTVDRAPLRNKYFFGEGYTYGAQLQRRGPGQERLYPKGEVDEIPGWVHELVIRRLVERRIIPEGFVNSAVINDYQPGGCIVSHVDPIHIFERPIVSVSFFSDSALCFGCKFQFKPIRVSEPVFFLPVRRGSVTVLSGYAADEITHCIRPQDIKERRAVVILRKTRTEAPRLEMKSLSSSYQPERLQGSNRQHILKPKRSHRKADPDAAHRPRILEMDKEENRRSVLLPKQRRRSHFSSENYWRRSHDHVDTYTETGEDEGSPVRKVKMRRH.

Residues 1–53 form a disordered region; sequence MSATYTDLREKLQSLNRDSPKEVRKRKQPASDTEEEDEAGSEPEAEEEEARKV. A compositionally biased stretch (basic and acidic residues) spans 7-22; that stretch reads DLREKLQSLNRDSPKE. The span at 32-48 shows a compositional bias: acidic residues; it reads DTEEEDEAGSEPEAEEE. The active site involves Y107. The 2-oxoglutarate site is built by N161, Y163, H172, H234, and R245. A disulfide bridge connects residues C198 and C235. Residues 261–360 form a disordered region; it reads EMKSLSSSYQ…PVRKVKMRRH (100 aa). The span at 264–280 shows a compositional bias: polar residues; that stretch reads SLSSSYQPERLQGSNRQ. Positions 281–290 are enriched in basic residues; that stretch reads HILKPKRSHR. 2 stretches are compositionally biased toward basic and acidic residues: residues 291 to 312 and 330 to 340; these read KADP…ENRR and YWRRSHDHVDT.

This sequence belongs to the alkB family. As to quaternary structure, monomer. It depends on Fe(2+) as a cofactor.

The protein localises to the nucleus speckle. It catalyses the reaction an N(6)-methyladenosine in mRNA + 2-oxoglutarate + O2 = an adenosine in mRNA + formaldehyde + succinate + CO2. Its function is as follows. Dioxygenase that specifically demethylates N(6)-methyladenosine (m6A) RNA, the most prevalent internal modification of messenger RNA (mRNA) in higher eukaryotes. Demethylates RNA by oxidative demethylation, which requires molecular oxygen, alpha-ketoglutarate and iron. Demethylation of m6A mRNA affects mRNA processing, translation and export. In Xenopus laevis (African clawed frog), this protein is RNA demethylase ALKBH5 (alkbh5).